A 235-amino-acid chain; its full sequence is NAD(P)H-quinone oxidoreductase subunit K (235 aa).

Residues cysteine 52, cysteine 53, cysteine 117, and cysteine 148 each coordinate [4Fe-4S] cluster. Over residues 216-226 (AGAAVAPQLPV) the composition is skewed to low complexity. The disordered stretch occupies residues 216–235 (AGAAVAPQLPVTEKEGRDRA).

The protein belongs to the complex I 20 kDa subunit family. NDH-1 can be composed of about 15 different subunits; different subcomplexes with different compositions have been identified which probably have different functions. Requires [4Fe-4S] cluster as cofactor.

The protein resides in the cellular thylakoid membrane. It carries out the reaction a plastoquinone + NADH + (n+1) H(+)(in) = a plastoquinol + NAD(+) + n H(+)(out). The catalysed reaction is a plastoquinone + NADPH + (n+1) H(+)(in) = a plastoquinol + NADP(+) + n H(+)(out). In terms of biological role, NDH-1 shuttles electrons from an unknown electron donor, via FMN and iron-sulfur (Fe-S) centers, to quinones in the respiratory and/or the photosynthetic chain. The immediate electron acceptor for the enzyme in this species is believed to be plastoquinone. Couples the redox reaction to proton translocation, and thus conserves the redox energy in a proton gradient. Cyanobacterial NDH-1 also plays a role in inorganic carbon-concentration. The sequence is that of NAD(P)H-quinone oxidoreductase subunit K from Synechococcus elongatus (strain ATCC 33912 / PCC 7942 / FACHB-805) (Anacystis nidulans R2).